The following is a 365-amino-acid chain: Sesquiterpene synthase 3 (365 aa).

4 residues coordinate Mg(2+): Asp-117, Asn-253, Ser-257, and Glu-261. The DDXXD motif motif lies at 117–121 (DDWSD). The NSE/DTE motif motif lies at 253 to 261 (NDILSYNRE). 2 residues coordinate (2E,6E)-farnesyl diphosphate: Arg-341 and Tyr-342.

This sequence belongs to the terpene synthase family. Mg(2+) serves as cofactor.

The enzyme catalyses (2E,6E)-farnesyl diphosphate = delta-cadinene + diphosphate. Its function is as follows. Terpene cyclase that catalyzes the cyclization of farnesyl diphosphate (FPP) to various sesquiterpenes, including beta-elemene gamma-cadinene, delta-cadinene, and alpha-cadinene. In Postia placenta (strain ATCC 44394 / Madison 698-R) (Brown rot fungus), this protein is Sesquiterpene synthase 3.